The chain runs to 356 residues: OVARIAN TUMOR DOMAIN-containing deubiquitinating enzyme 10 (356 aa).

Residues 86–117 (DYSHQNQQQQHQQEGYTNNYSNNNNGYAWNDQ) are disordered. Low complexity predominate over residues 89–115 (HQNQQQQHQQEGYTNNYSNNNNGYAWN). The region spanning 213–337 (FTEVKVPGDG…EVHYNAIYLN (125 aa)) is the OTU domain. The active site involves Asp-221. The active-site Nucleophile is Cys-224. His-330 is a catalytic residue.

It belongs to the peptidase C85 family.

The enzyme catalyses Thiol-dependent hydrolysis of ester, thioester, amide, peptide and isopeptide bonds formed by the C-terminal Gly of ubiquitin (a 76-residue protein attached to proteins as an intracellular targeting signal).. Hydrolase that can remove conjugated ubiquitin from proteins in vitro and may therefore play an important regulatory role at the level of protein turnover by preventing degradation. Cysteine protease with a preference for 'Lys-63' over 'Lys-48' over 'Met-1' -linked ubiquitin (UB) tetramers as substrates. Also cleaves RUB-GST fusion. This Arabidopsis thaliana (Mouse-ear cress) protein is OVARIAN TUMOR DOMAIN-containing deubiquitinating enzyme 10.